Reading from the N-terminus, the 158-residue chain is MNKPKNSPARKMIAENRKARFNFEILDTLEAGLVLTGTEVKSLRANQANIAESYASFEDGEFWLINSYIPEYTQGNRFNHEPRRLRKLLVSRWEMSRLFNSVSREGMTVVPLKLYFNDRGRAKLELALARGKKTHDKRETEKKRDWNREKARLLRDRG.

The interval 131–158 is disordered; the sequence is GKKTHDKRETEKKRDWNREKARLLRDRG. Residues 136 to 158 are compositionally biased toward basic and acidic residues; that stretch reads DKRETEKKRDWNREKARLLRDRG.

The protein belongs to the SmpB family.

The protein localises to the cytoplasm. Required for rescue of stalled ribosomes mediated by trans-translation. Binds to transfer-messenger RNA (tmRNA), required for stable association of tmRNA with ribosomes. tmRNA and SmpB together mimic tRNA shape, replacing the anticodon stem-loop with SmpB. tmRNA is encoded by the ssrA gene; the 2 termini fold to resemble tRNA(Ala) and it encodes a 'tag peptide', a short internal open reading frame. During trans-translation Ala-aminoacylated tmRNA acts like a tRNA, entering the A-site of stalled ribosomes, displacing the stalled mRNA. The ribosome then switches to translate the ORF on the tmRNA; the nascent peptide is terminated with the 'tag peptide' encoded by the tmRNA and targeted for degradation. The ribosome is freed to recommence translation, which seems to be the essential function of trans-translation. The protein is SsrA-binding protein of Brucella ovis (strain ATCC 25840 / 63/290 / NCTC 10512).